We begin with the raw amino-acid sequence, 324 residues long: tRNA dimethylallyltransferase (324 aa).

17-24 (GPTASGKT) is a binding site for ATP. Residue 19-24 (TASGKT) participates in substrate binding. Interaction with substrate tRNA regions lie at residues 42–45 (DSAL), 166–170 (QRIQR), 251–256 (RCVGYR), and 284–291 (KRQITWLR).

It belongs to the IPP transferase family. As to quaternary structure, monomer. Mg(2+) serves as cofactor.

The enzyme catalyses adenosine(37) in tRNA + dimethylallyl diphosphate = N(6)-dimethylallyladenosine(37) in tRNA + diphosphate. Functionally, catalyzes the transfer of a dimethylallyl group onto the adenine at position 37 in tRNAs that read codons beginning with uridine, leading to the formation of N6-(dimethylallyl)adenosine (i(6)A). This is tRNA dimethylallyltransferase from Burkholderia vietnamiensis (strain G4 / LMG 22486) (Burkholderia cepacia (strain R1808)).